Reading from the N-terminus, the 337-residue chain is Terpene synthase 4 (337 aa).

Mg(2+)-binding residues include D94 and D98. Positions D94 to D98 match the D(D/E)XX(D/E) motif motif. R195 contacts substrate. The Mg(2+) site is built by N241, S245, and E249. Residues N241–E249 carry the NSE motif motif. The short motif at W320 to Y327 is the WxxxxxRY motif element.

It belongs to the terpene synthase family. Requires Mg(2+) as cofactor.

The catalysed reaction is (2E,6E)-farnesyl diphosphate = alpha-muurolene + diphosphate. It carries out the reaction (2E,6E)-farnesyl diphosphate = (-)-(E)-beta-caryophyllene + diphosphate. Terpene synthase that catalyzes the cyclization of farnesyl diphosphate (FPP) into alpha-muurolene, (-)-beta-caryophyllene, and one unidentified sesquiterpene. TPS4 shows only trace monoterpene synthase activity with geranyl diphosphate (GPP) as substrate and produces very small amounts of myrcene. P.polycephalum has a unique biology and these volatile terpenoids could function in internal communication of P.polycephalum, to mark the territory that have been explored, or they may be involved in chemotaxis. The polypeptide is Terpene synthase 4 (Physarum polycephalum (Slime mold)).